We begin with the raw amino-acid sequence, 479 residues long: Pre-glycoprotein polyprotein GP complex (479 aa).

Residue Gly2 is the site of N-myristoyl glycine; by host attachment. At 2-17 (GQLISFFQDIPIFFEE) the chain is on the extracellular side. Residues 18–32 (ALNVALAVVTLLAII) form a helical membrane-spanning segment. Position 33 (Lys33) is a topological domain, cytoplasmic. The chain crosses the membrane as a helical span at residues 34–53 (GIVNVWKSGILQLFVFLVLA). Extracellular loops occupy residues 54–58 (GRSCS) and 59–418 (FKVG…TLVD). Zn(2+) is bound at residue Cys57. Disulfide bonds link Cys85–Cys221, Cys265–Cys278, and Cys287–Cys296. Residues Asn88, Asn125, Asn174, Asn202, and Asn214 are each glycosylated (N-linked (GlcNAc...) asparagine; by host). N-linked (GlcNAc...) asparagine; by host glycans are attached at residues Asn314, Asn351, Asn359, Asn376, and Asn381. An intrachain disulfide couples Cys350 to Cys371. The helical transmembrane segment at 419-439 (LCFWSAIFFTTSLFLHLVGFP) threads the bilayer. Topologically, residues 440–479 (THRHIQGDPCPLPHRLDRNGACRCGRFQKLGKQVTWKRKH) are cytoplasmic. The Zn(2+) site is built by His441, His443, Cys449, His453, Cys461, Cys463, and His479.

It belongs to the arenaviridae GPC protein family. Homotetramer; disulfide-linked. In terms of assembly, homotetramer. GP2 homotetramers bind through ionic interactions with GP1 homotetramers to form the GP complex together with the stable signal peptide. The GP-C polyprotein interacts with the host protease MBTPS1/SKI-1 resulting in the polyprotein processing. Specific enzymatic cleavages in vivo yield mature proteins. GP-C polyprotein is cleaved in the endoplasmic reticulum by the host protease MBTPS1. Only cleaved glycoprotein is incorporated into virions. Post-translationally, the SSP remains stably associated with the GP complex following cleavage by signal peptidase and plays crucial roles in the trafficking of GP through the secretory pathway. In terms of processing, myristoylation is necessary for GP2-mediated fusion activity.

It localises to the virion membrane. Its subcellular location is the host endoplasmic reticulum membrane. It is found in the host Golgi apparatus membrane. The protein resides in the host cell membrane. Its function is as follows. Interacts with the host receptor. Mediates virus attachment to host TFRC. This attachment induces virion internalization predominantly through clathrin-mediated endocytosis. Class I viral fusion protein that directs fusion of viral and host endosomal membranes, leading to delivery of the nucleocapsid into the cytoplasm. Membrane fusion is mediated by irreversible conformational changes induced upon acidification in the endosome. In terms of biological role, stable signal peptide (SSP): cleaved and functions as a signal peptide. In addition, it is also retained as the third component of the GP complex. The SSP is required for efficient glycoprotein expression, post-translational maturation cleavage of GP1 and GP2, glycoprotein transport to the cell surface plasma membrane, formation of infectious virus particles, and acid pH-dependent glycoprotein-mediated cell fusion. The protein is Pre-glycoprotein polyprotein GP complex of Homo sapiens (Human).